The following is a 460-amino-acid chain: GTPase Der (460 aa).

2 EngA-type G domains span residues 4 to 174 (PQVA…PRRE) and 184 to 361 (PKIA…AERS). GTP contacts are provided by residues 10–17 (GRPNVGKS), 57–61 (DTGGL), 126–129 (NKAE), 190–197 (GRPNVGKS), 237–241 (DTAGI), and 302–305 (NKWD). Positions 362 to 446 (RRIPTAELNQ…PIELVFRERE (85 aa)) constitute a KH-like domain.

Belongs to the TRAFAC class TrmE-Era-EngA-EngB-Septin-like GTPase superfamily. EngA (Der) GTPase family. In terms of assembly, associates with the 50S ribosomal subunit.

Functionally, GTPase that plays an essential role in the late steps of ribosome biogenesis. The polypeptide is GTPase Der (Thermomicrobium roseum (strain ATCC 27502 / DSM 5159 / P-2)).